The sequence spans 607 residues: WD repeat-containing protein 1-B (607 aa).

13 WD repeats span residues 4 to 45, 48 to 87, 93 to 135, 138 to 176, 180 to 218, 224 to 263, 270 to 306, 311 to 351, 358 to 408, 432 to 474, 480 to 518, 523 to 561, and 566 to 604; these read EIKK…IRNI, PAIA…IWDT, LLKY…LWDT, SVGE…FFEG, KFKF…LYDG, VCSL…IWDV, TTFN…YLDK, KPFR…YWDA, TFTG…KMDV, LKDK…LYSI, KDEG…VFSV, SEHN…VWTL, and TRIK…QWTV.

The protein belongs to the WD repeat AIP1 family.

The protein localises to the cell membrane. It localises to the cytoplasm. Its subcellular location is the cytoskeleton. It is found in the nucleus. Induces disassembly of actin filaments in conjunction with ADF/cofilin family proteins. Doesn't sever actin filaments alone, but caps the barbed ends of filaments severed by cofilin, which blocks annealing and depolymerization and allows more extensive severing by cofilin. In Xenopus laevis (African clawed frog), this protein is WD repeat-containing protein 1-B (wdr1-b).